The sequence spans 252 residues: Imidazole glycerol phosphate synthase subunit HisF (252 aa).

Active-site residues include D11 and D130.

Belongs to the HisA/HisF family. In terms of assembly, heterodimer of HisH and HisF.

Its subcellular location is the cytoplasm. The enzyme catalyses 5-[(5-phospho-1-deoxy-D-ribulos-1-ylimino)methylamino]-1-(5-phospho-beta-D-ribosyl)imidazole-4-carboxamide + L-glutamine = D-erythro-1-(imidazol-4-yl)glycerol 3-phosphate + 5-amino-1-(5-phospho-beta-D-ribosyl)imidazole-4-carboxamide + L-glutamate + H(+). Its pathway is amino-acid biosynthesis; L-histidine biosynthesis; L-histidine from 5-phospho-alpha-D-ribose 1-diphosphate: step 5/9. Functionally, IGPS catalyzes the conversion of PRFAR and glutamine to IGP, AICAR and glutamate. The HisF subunit catalyzes the cyclization activity that produces IGP and AICAR from PRFAR using the ammonia provided by the HisH subunit. This is Imidazole glycerol phosphate synthase subunit HisF from Paramagnetospirillum magneticum (strain ATCC 700264 / AMB-1) (Magnetospirillum magneticum).